The chain runs to 35 residues: MSDINGTRLPIPGLIPLGIPCVSDDVNPTLTRGER.

The propeptide occupies 1–10 (MSDINGTRLP). Residues 11–20 (IPGLIPLGIP) constitute a cross-link (cyclopeptide (Ile-Pro)). Positions 21-35 (CVSDDVNPTLTRGER) are excised as a propeptide.

It belongs to the MSDIN fungal toxin family. Processed by the macrocyclase-peptidase enzyme POPB to yield a toxic cyclic decapeptide. POPB first removes 10 residues from the N-terminus. Conformational trapping of the remaining peptide forces the enzyme to release this intermediate rather than proceed to macrocyclization. The enzyme rebinds the remaining peptide in a different conformation and catalyzes macrocyclization of the N-terminal 10 residues.

Probable toxin that belongs to the MSDIN-like toxin family responsible for a large number of food poisoning cases and deaths. The protein is MSDIN-like toxin proprotein 6 of Amanita bisporigera (Destroying angel).